Here is a 286-residue protein sequence, read N- to C-terminus: Gap junction alpha-6 protein (286 aa).

Residues 1 to 23 (MSDWSALHQLLEKVQPYSTAGGK) are Cytoplasmic-facing. A helical membrane pass occupies residues 24-41 (VWIKVLFIFRILLLGTAI). The Extracellular portion of the chain corresponds to 42-76 (ESAWSDEQFEFHCNTQQPGCENVCYDQAFPISHVR). Residues 77–99 (LWVLQVIFVSVPTLLHLAHVYYV) form a helical membrane-spanning segment. Topologically, residues 100–151 (IRQNEKLKKQEEEELKVAHFNGASGERRLQKHTGKHIKCGSKEHGNRKMRGR) are cytoplasmic. The chain crosses the membrane as a helical span at residues 152–174 (LLLTYMASIFFKSVFEVAFLLIQ). Over 175–209 (WYLYGFTLSAVYICEQSPCPHRVDCFLSRPTEKTI) the chain is Extracellular. The chain crosses the membrane as a helical span at residues 210 to 232 (FILFMLVVSMVSFVLNVIELFYV). The Cytoplasmic portion of the chain corresponds to 233 to 286 (LFKAIKNHLGNEKEEVYCNPVELQKPSCVSSSAVLTTICSSDQVVPVGLSSFYM).

It belongs to the connexin family. Alpha-type (group II) subfamily. In terms of assembly, a connexon is composed of a hexamer of connexins. As to expression, expressed in testis.

Its subcellular location is the cell membrane. The protein resides in the cell junction. It is found in the gap junction. Functionally, one gap junction consists of a cluster of closely packed pairs of transmembrane channels, the connexons, through which materials of low MW diffuse from one cell to a neighboring cell. This is Gap junction alpha-6 protein (Gja6) from Rattus norvegicus (Rat).